A 474-amino-acid polypeptide reads, in one-letter code: Peroxisome proliferator-activated receptor alpha (474 aa).

The segment at residues 106–180 (NLECRVCSDK…VGMSHNAIRF (75 aa)) is a DNA-binding region (nuclear receptor). 2 NR C4-type zinc fingers span residues 109-129 (CRVC…CEGC) and 146-168 (CERM…FEKC). Positions 245–472 (FVIHDMETLC…HPLLQEIYRD (228 aa)) constitute an NR LBD domain.

The protein belongs to the nuclear hormone receptor family. NR1 subfamily. As to quaternary structure, heterodimer with the retinoid X receptor. In terms of tissue distribution, ubiquitous.

Its subcellular location is the nucleus. Its function is as follows. Ligand-activated transcription factor. Key regulator of lipid metabolism. Activated by lipids. Receptor for peroxisome proliferators such as hypolipidemic drugs and fatty acids. Once activated by a ligand, the receptor binds to promoter elements of target genes. Regulates the peroxisomal beta-oxidation pathway of fatty acids. This Xenopus laevis (African clawed frog) protein is Peroxisome proliferator-activated receptor alpha (ppara).